Reading from the N-terminus, the 236-residue chain is Sensory rhodopsin II (236 aa).

7 helical membrane passes run 4 to 24 (ITTW…VLAY), 38 to 58 (LLLI…ALGF), 73 to 93 (YVDW…LAGA), 101 to 121 (LVVL…TPSP), 122 to 142 (VSYA…YLLY), 167 to 187 (FVVV…AGVG), and 196 to 216 (LVVV…ALLA). Residue K206 is modified to N6-(retinylidene)lysine.

It belongs to the archaeal/bacterial/fungal opsin family. In terms of processing, the covalent binding of retinal to the apoprotein, bacterioopsin, generates bacteriorhodopsin.

The protein resides in the membrane. Functionally, mediates the photorepellent response. In Haloarcula marismortui (strain ATCC 43049 / DSM 3752 / JCM 8966 / VKM B-1809) (Halobacterium marismortui), this protein is Sensory rhodopsin II (sop2).